The primary structure comprises 181 residues: Histone deacetylase complex subunit SAP30L-A (181 aa).

2 disulfides stabilise this stretch: Cys-26/Cys-27 and Cys-35/Cys-71. An Atypical zinc finger spans residues 26–74 (CCLIDGGERCPRPAGNASFSKRVQKSISQKKLKLDIDKNVRHLYICDFH). The tract at residues 82 to 103 (RNKRKRKTSDDGGDSPEHETDI) is disordered. The short motif at 83 to 88 (NKRKRK) is the Nuclear localization signal (NLS) element. The tract at residues 85–87 (RKR) is important for DNA and phosphoinositide binding.

Belongs to the SAP30 family. As to quaternary structure, interacts with components of the histone deacetylase complex sin3a, hdac1 and hdac2. Binds histones and nucleosomes.

The protein localises to the nucleus. Its subcellular location is the nucleolus. Its function is as follows. Functions as a transcription repressor, probably via its interaction with histone deacetylase complexes. Involved in the functional recruitment of the class 1 Sin3-histone deacetylase complex (HDAC) to the nucleolus. Binds DNA, apparently without sequence-specificity, and bends bound double-stranded DNA. Binds phosphoinositol phosphates (phosphoinositol 3-phosphate, phosphoinositol 4-phosphate and phosphoinositol 5-phosphate) via the same basic sequence motif that mediates DNA binding and nuclear import. This chain is Histone deacetylase complex subunit SAP30L-A (sap30l-a), found in Xenopus laevis (African clawed frog).